The primary structure comprises 552 residues: MVSVQKVPAIVLCSGVSLALLHVLCLATCLNESPGQNSKDEKLCPENFTRILDSLLDGYDNRLRPGFGGPVTEVKTDIYVTSFGPVSDVEMEYTMDVFFRQTWIDKRLKYDGPIEILRLNNMMVTKVWTPDTFFRNGKKSVSHNMTAPNKLFRIMRNGTILYTMRLTISAECPMRLVDFPMDGHACPLKFGSYAYPKSEMIYTWTKGPEKSVEVPKESSSLVQYDLIGQTVSSETIKSITGEYIVMTVYFHLRRKMGYFMIQTYIPCIMTVILSQVSFWINKESVPARTVFGITTVLTMTTLSISARHSLPKVSYATAMDWFIAVCFAFVFSALIEFAAVNYFTNIQMQKAKKKISKPPPEVPAAPVLKEKHTETSLQNTHANLNMRKRTNALVHSESDVNSRTEVGNHSSKTTAAQESSETTPKAHLASSPNPFSRANAAETISAAARGLSSAASPSPHGTLQPAPLRSASARPAFGARLGRIKTTVNTTGVPGNVSATPPPSAPPPSGSGTSKIDKYARILFPVTFGAFNMVYWVVYLSKDTMEKSESLM.

The signal sequence occupies residues 1–35; sequence MVSVQKVPAIVLCSGVSLALLHVLCLATCLNESPG. Residues 36 to 259 are Extracellular-facing; it reads QNSKDEKLCP…FHLRRKMGYF (224 aa). Asparagine 47 carries N-linked (GlcNAc...) asparagine glycosylation. Arginine 100 serves as a coordination point for 4-aminobutanoate. N-linked (GlcNAc...) asparagine glycans are attached at residues asparagine 144 and asparagine 157. Threonine 163 contributes to the 4-aminobutanoate binding site. Cysteine 172 and cysteine 186 are joined by a disulfide. Residues 260–280 form a helical membrane-spanning segment; sequence MIQTYIPCIMTVILSQVSFWI. At 281–284 the chain is on the cytoplasmic side; it reads NKES. Residues 285–305 traverse the membrane as a helical segment; it reads VPARTVFGITTVLTMTTLSIS. The Extracellular portion of the chain corresponds to 306–318; the sequence is ARHSLPKVSYATA. Residues 319–341 traverse the membrane as a helical segment; it reads MDWFIAVCFAFVFSALIEFAAVN. The Cytoplasmic segment spans residues 342-515; the sequence is YFTNIQMQKA…PPPSGSGTSK (174 aa). 3 disordered regions span residues 353–436, 448–470, and 486–513; these read KKIS…NPFS, ARGLSSAASPSPHGTLQPAPLRS, and TTVNTTGVPGNVSATPPPSAPPPSGSGT. Positions 403-423 are enriched in polar residues; sequence RTEVGNHSSKTTAAQESSETT. Low complexity-rich tracts occupy residues 448-458 and 486-499; these read ARGLSSAASPS and TTVNTTGVPGNVSA. Positions 500-509 are enriched in pro residues; it reads TPPPSAPPPS. Residues 516-538 traverse the membrane as a helical segment; it reads IDKYARILFPVTFGAFNMVYWVV. Over 539–552 the chain is Extracellular; the sequence is YLSKDTMEKSESLM.

It belongs to the ligand-gated ion channel (TC 1.A.9) family. Gamma-aminobutyric acid receptor (TC 1.A.9.5) subfamily. GABRA4 sub-subfamily. As to quaternary structure, heteropentamer, formed by a combination of alpha (GABRA1-6), beta (GABRB1-3), gamma (GABRG1-3), delta (GABRD), epsilon (GABRE), rho (GABRR1-3), pi (GABRP) and theta (GABRQ) chains, each subunit exhibiting distinct physiological and pharmacological properties. In terms of tissue distribution, expressed in the brain.

Its subcellular location is the cell membrane. The protein resides in the postsynaptic cell membrane. Its activity is regulated as follows. Potentiated by histamine. Alpha subunit of the heteropentameric ligand-gated chloride channel gated by gamma-aminobutyric acid (GABA), a major inhibitory neurotransmitter in the brain. GABA-gated chloride channels, also named GABA(A) receptors (GABAAR), consist of five subunits arranged around a central pore and contain GABA active binding site(s) located at the alpha and beta subunit interface(s). Alpha-4/GABRA4 subunit often assembles with delta or gamma-2 subunits, in combination with beta subunits. When activated by GABA, GABAARs selectively allow the flow of chloride anions across the cell membrane down their electrochemical gradient. GABAARs containing alpha-4 are predominantly extrasynaptic, contributing to tonic inhibition in dentate granule cells and thalamic relay neurons. Extrasynaptic alpha-4-containing GABAARs control levels of excitability and network activity. GABAAR containing alpha-4-beta-3-delta subunits can simultaneously bind GABA and histamine where histamine binds at the interface of two neighboring beta subunits, which may be involved in the regulation of sleep and wakefulness. The chain is Gamma-aminobutyric acid receptor subunit alpha-4 from Rattus norvegicus (Rat).